The sequence spans 199 residues: NAD(P)H dehydrogenase (quinone) (199 aa).

The region spanning 4 to 190 (VLVLYYSAYG…AGARYQGRVI (187 aa)) is the Flavodoxin-like domain. Residues 10–15 (SAYGHI) and 78–80 (TRF) contribute to the FMN site. Y12 serves as a coordination point for NAD(+). A substrate-binding site is contributed by W98. FMN contacts are provided by residues 113-119 (STATQHG) and H134.

This sequence belongs to the WrbA family. It depends on FMN as a cofactor.

It carries out the reaction a quinone + NADH + H(+) = a quinol + NAD(+). The enzyme catalyses a quinone + NADPH + H(+) = a quinol + NADP(+). In Bradyrhizobium sp. (strain BTAi1 / ATCC BAA-1182), this protein is NAD(P)H dehydrogenase (quinone).